Here is a 279-residue protein sequence, read N- to C-terminus: Protein SCO2 homolog, mitochondrial (279 aa).

Residues Leu-73 to Val-90 form a helical membrane-spanning segment. Residues His-91–Asp-279 lie on the Mitochondrial intermembrane side of the membrane. One can recognise a Thioredoxin domain in the interval Arg-97 to Lys-271. Cu cation contacts are provided by Cys-145, Cys-149, and His-236. Cys-145 and Cys-149 form a disulfide bridge.

It belongs to the SCO1/2 family. In terms of assembly, homodimer.

The protein resides in the mitochondrion inner membrane. Its function is as follows. Copper metallochaperone essential for the synthesis and maturation of cytochrome c oxidase subunit II (MT-CO2/COX2) by facilitating the incorporation of copper into the Cu(A) site of MT-CO2/COX2. Could also act as a thiol-disulfide oxidoreductase to regulate the redox state of the cysteines in SCO1 during maturation of MT-CO2/COX2. The protein is Protein SCO2 homolog, mitochondrial (sco2) of Danio rerio (Zebrafish).